The following is a 494-amino-acid chain: AAA-ATPase At2g18190 (494 aa).

The chain crosses the membrane as a helical span at residues 13 to 29; sequence SSLFTAYASLTGFLMLF. Position 251–258 (251–258) interacts with ATP; the sequence is GPPGTGKS. Basic and acidic residues predominate over residues 459-470; it reads TCRKLDGDDKHN. Residues 459–494 form a disordered region; the sequence is TCRKLDGDDKHNVSSTNDLKKTKKKKKGGKGKAKGN. The span at 479-494 shows a compositional bias: basic residues; that stretch reads KTKKKKKGGKGKAKGN.

Belongs to the AAA ATPase family. BCS1 subfamily. Mg(2+) serves as cofactor.

Its subcellular location is the membrane. The catalysed reaction is ATP + H2O = ADP + phosphate + H(+). The protein is AAA-ATPase At2g18190 of Arabidopsis thaliana (Mouse-ear cress).